The primary structure comprises 159 residues: Phosphopantetheine adenylyltransferase (159 aa).

Residue threonine 10 coordinates substrate. ATP contacts are provided by residues 10–11 and histidine 18; that span reads TF. Lysine 42, leucine 74, and arginine 88 together coordinate substrate. ATP-binding positions include 89 to 91, glutamate 99, and 124 to 130; these read GLR and YAFISSS.

The protein belongs to the bacterial CoaD family. In terms of assembly, homohexamer. Mg(2+) serves as cofactor.

Its subcellular location is the cytoplasm. It catalyses the reaction (R)-4'-phosphopantetheine + ATP + H(+) = 3'-dephospho-CoA + diphosphate. The protein operates within cofactor biosynthesis; coenzyme A biosynthesis; CoA from (R)-pantothenate: step 4/5. Functionally, reversibly transfers an adenylyl group from ATP to 4'-phosphopantetheine, yielding dephospho-CoA (dPCoA) and pyrophosphate. The protein is Phosphopantetheine adenylyltransferase of Hydrogenovibrio crunogenus (strain DSM 25203 / XCL-2) (Thiomicrospira crunogena).